The primary structure comprises 706 residues: Zinc finger CCCH domain-containing protein 56 (706 aa).

2 ANK repeats span residues 83–113 (EQRTPLMVASLYGSLDVVKFILSFPEAELNL) and 118–150 (DKSTALHCAASGASVNSLDVVKLLLSVGADPNI). The span at 211–221 (SSLLSLDSVSS) shows a compositional bias: low complexity. The tract at residues 211-235 (SSLLSLDSVSSPTKPHGTDVTFASE) is disordered. C3H1-type zinc fingers lie at residues 302–324 (PCPDFKKGSCKQGDMCEYAHGVF) and 332–356 (QYRTRLCKDGMGCNRRVCFFAHANE). 3 disordered regions span residues 396 to 427 (PSAAQHSFTPPISPSGNGSMPHSSMGWPQQNI), 545 to 616 (SPKN…QTHG), and 652 to 692 (QMLK…TRES). Composition is skewed to polar residues over residues 397–427 (SAAQHSFTPPISPSGNGSMPHSSMGWPQQNI) and 545–560 (SPKNVEQHSLLQQASS). Serine 568 is modified (phosphoserine). Residues 580–592 (SRSLSSRDFGSSL) are compositionally biased toward low complexity. 3 stretches are compositionally biased toward polar residues: residues 600-616 (DSGSPLSPWSSWDQTHG), 652-667 (QMLKDSSSPRNGNRVV), and 677-686 (QGGSSVNPHN).

This Arabidopsis thaliana (Mouse-ear cress) protein is Zinc finger CCCH domain-containing protein 56.